The chain runs to 280 residues: Hydroxyethylthiazole kinase (280 aa).

Position 50 (M50) interacts with substrate. Positions 125 and 178 each coordinate ATP. G205 contacts substrate.

It belongs to the Thz kinase family. It depends on Mg(2+) as a cofactor.

The catalysed reaction is 5-(2-hydroxyethyl)-4-methylthiazole + ATP = 4-methyl-5-(2-phosphooxyethyl)-thiazole + ADP + H(+). Its pathway is cofactor biosynthesis; thiamine diphosphate biosynthesis; 4-methyl-5-(2-phosphoethyl)-thiazole from 5-(2-hydroxyethyl)-4-methylthiazole: step 1/1. In terms of biological role, catalyzes the phosphorylation of the hydroxyl group of 4-methyl-5-beta-hydroxyethylthiazole (THZ). This is Hydroxyethylthiazole kinase from Lacticaseibacillus paracasei (strain ATCC 334 / BCRC 17002 / CCUG 31169 / CIP 107868 / KCTC 3260 / NRRL B-441) (Lactobacillus paracasei).